Here is a 596-residue protein sequence, read N- to C-terminus: Arrestin domain-containing protein C31A2.12 (596 aa).

Residues 194–211 (AYAIGSYIPIHFVLVPLL) traverse the membrane as a helical segment. Disordered stretches follow at residues 363-387 (NLDT…TYAS) and 405-446 (QQQP…VITR). A phosphothreonine mark is found at T373 and T374. Composition is skewed to polar residues over residues 405-420 (QQQP…SPSN) and 430-446 (SLGS…VITR). 4 positions are modified to phosphoserine: S452, S474, S493, and S497. The tract at residues 493-596 (SRPPSPGIVT…MLPSGFSRRN (104 aa)) is disordered. A phosphothreonine mark is found at T502 and T507. A compositionally biased stretch (polar residues) spans 504 to 522 (PQRTSPSFFVSPTESTRQS). Position 514 is a phosphoserine (S514). Positions 531–555 (HSTSSSSGISPSHSSASLAHLSQAS) are enriched in low complexity.

The protein belongs to the arrestin family.

The protein resides in the membrane. In Schizosaccharomyces pombe (strain 972 / ATCC 24843) (Fission yeast), this protein is Arrestin domain-containing protein C31A2.12.